A 201-amino-acid chain; its full sequence is Retinol binding protein 4 (201 aa).

The signal sequence occupies residues 1–18 (MAWVWALVLLAALGSARA). Cystine bridges form between C22/C178, C88/C192, and C138/C147. Q116 serves as a coordination point for substrate. An Omega-N-methylarginine modification is found at R139.

The protein belongs to the calycin superfamily. Lipocalin family. As to quaternary structure, interacts with TTR. Interaction with TTR prevents its loss by filtration through the kidney glomeruli. Interacts with STRA6. Highly expressed in liver. Also expressed in adipose tissue. Expressed by endometrium from days 16-25 and by unattached chorioallantois from days 30-36 during pregnancy.

It is found in the secreted. In terms of biological role, retinol-binding protein that mediates retinol transport in blood plasma. Delivers retinol from the liver stores to the peripheral tissues. Transfers the bound all-trans retinol to STRA6, that then facilitates retinol transport across the cell membrane. In Felis catus (Cat), this protein is Retinol binding protein 4.